Reading from the N-terminus, the 64-residue chain is Alpha-conotoxin CnIL (64 aa).

An N-terminal signal peptide occupies residues 1–21; the sequence is MGMRMMFTVFLLVVLTTTVVS. Positions 22–49 are excised as a propeptide; sequence FPSDSASDGRDDEAKDERSDIYESKRDG. Disulfide bonds link Cys-51–Cys-56 and Cys-52–Cys-62. Cysteine amide is present on Cys-62.

This sequence belongs to the conotoxin A superfamily. As to expression, expressed by the venom duct.

The protein localises to the secreted. The sequence is that of Alpha-conotoxin CnIL from Conus consors (Singed cone).